The primary structure comprises 323 residues: Protease Do-like 5, chloroplastic (323 aa).

A chloroplast-targeting transit peptide spans 1–28 (MTMALASSKAFSSIFNTLSPINQSKFVL). The N-terminal 45 residues, 29 to 73 (ACSGSNHVDVIDRRRRIMIFGSSLALTSSLLGSNQQRLPMESAIA), are a transit peptide targeting the thylakoid. Catalysis depends on charge relay system residues histidine 147, aspartate 188, and serine 266. A serine protease region spans residues 186-283 (DNDLAVLKIE…YGHTIGVNTA (98 aa)).

Belongs to the peptidase S1C family.

It localises to the plastid. It is found in the chloroplast thylakoid lumen. Probable serine protease. The protein is Protease Do-like 5, chloroplastic (DEGP5) of Arabidopsis thaliana (Mouse-ear cress).